Reading from the N-terminus, the 201-residue chain is Potassium-transporting ATPase KdpC subunit (201 aa).

A helical transmembrane segment spans residues 10–30; sequence VVLVVLTVICGLAYPLAMTGI. The segment at 67-105 is disordered; the sequence is HGRPSATSAADPADPTKTVSSPYNAANSSGSNLGPTSKA. The span at 70 to 82 shows a compositional bias: low complexity; sequence PSATSAADPADPT. The span at 83–105 shows a compositional bias: polar residues; sequence KTVSSPYNAANSSGSNLGPTSKA.

Belongs to the KdpC family. The system is composed of three essential subunits: KdpA, KdpB and KdpC.

The protein localises to the cell inner membrane. Part of the high-affinity ATP-driven potassium transport (or Kdp) system, which catalyzes the hydrolysis of ATP coupled with the electrogenic transport of potassium into the cytoplasm. This subunit acts as a catalytic chaperone that increases the ATP-binding affinity of the ATP-hydrolyzing subunit KdpB by the formation of a transient KdpB/KdpC/ATP ternary complex. The chain is Potassium-transporting ATPase KdpC subunit from Rhodopseudomonas palustris (strain BisB5).